A 390-amino-acid chain; its full sequence is GTPase Obg (390 aa).

The Obg domain occupies 1-159 (MKFIDESLIR…RDLLLELMLL (159 aa)). Positions 160–333 (ADVGMLGLPN…LCRDIMDFII (174 aa)) constitute an OBG-type G domain. GTP contacts are provided by residues 166–173 (GLPNAGKS), 191–195 (FTTLV), 213–216 (DIPG), 283–286 (NKID), and 314–316 (SAA). Serine 173 and threonine 193 together coordinate Mg(2+).

It belongs to the TRAFAC class OBG-HflX-like GTPase superfamily. OBG GTPase family. As to quaternary structure, monomer. The cofactor is Mg(2+).

Its subcellular location is the cytoplasm. An essential GTPase which binds GTP, GDP and possibly (p)ppGpp with moderate affinity, with high nucleotide exchange rates and a fairly low GTP hydrolysis rate. Plays a role in control of the cell cycle, stress response, ribosome biogenesis and in those bacteria that undergo differentiation, in morphogenesis control. In Haemophilus influenzae (strain 86-028NP), this protein is GTPase Obg.